We begin with the raw amino-acid sequence, 356 residues long: Glucose 1-dehydrogenase 2 (356 aa).

Aspartate 38 contacts Zn(2+). Serine 40 provides a ligand contact to substrate. Residues histidine 64 and glutamate 65 each coordinate Zn(2+). Substrate-binding residues include glutamate 114 and glutamate 150. Position 150 (glutamate 150) interacts with Zn(2+). Residues asparagine 181–leucine 184, arginine 206–arginine 207, and valine 301–asparagine 303 each bind NADP(+). Asparagine 303 serves as a coordination point for substrate.

The protein belongs to the zinc-containing alcohol dehydrogenase family. Glucose 1-dehydrogenase subfamily. Requires Zn(2+) as cofactor.

It catalyses the reaction D-glucose + NAD(+) = D-glucono-1,5-lactone + NADH + H(+). The catalysed reaction is D-glucose + NADP(+) = D-glucono-1,5-lactone + NADPH + H(+). Catalyzes the NAD(P)(+)-dependent oxidation of D-glucose to D-gluconate via gluconolactone. Can utilize both NAD(+) and NADP(+) as electron acceptor. Is involved in the degradation of glucose through a modified Entner-Doudoroff pathway. This chain is Glucose 1-dehydrogenase 2, found in Haloterrigena turkmenica (strain ATCC 51198 / DSM 5511 / JCM 9101 / NCIMB 13204 / VKM B-1734 / 4k) (Halococcus turkmenicus).